The chain runs to 684 residues: MEWGYLLEVTSLLAALAVLQRSSGAAAASAKELACQEITVPLCKGIGYNYTYMPNQFNHDTQDEAGLEVHQFWPLVEIQCSPDLKFFLCSMYTPICLEDYKKPLPPCRSVCERAKAGCAPLMRQYGFAWPDRMRCDRLPEQGNPDTLCMDYNRTDLTTAAPSPPRRLPPPQPGEQPPSGSGHSRPPGARPPHRGGSSRGSGDTAAAPPSRGGKARPPGGGAAPCEPGCQCRAPMVSVSSERHPLYNRVKTGQIANCALPCHNPFFSQDERAFTVFWIGLWSVLCFVSTFATVSTFLIDMERFKYPERPIIFLSACYLFVSVGYLVRLVAGHEKVACSGGAPGAGGAGGAGGAATAGAGAAGAGASSPGARGEYEELGAVEQHVRYETTGPALCTVVFLLVYFFGMASSIWWVILSLTWFLAAGMKWGNEAIAGYSQYFHLAAWLVPSVKSIAVLALSSVDGDPVAGICYVGNQSLDNLRGFVLAPLVIYLFIGTMFLLAGFVSLFRIRSVIKQQGGPTKTHKLEKLMIRLGLFTVLYTVPAAVVVACLFYEQHNRPRWEATHNCPCLRDLQPDQARRPDYAVFMLKYFMCLVVGITSGVWVWSGKTLESWRALCTRCCWASKGAAVGAGAGGSGPGGGGPGPGGGGGHGGGGGSLYSDVSTGLTWRSGTASSVSYPKQMPLSQV.

A signal peptide spans 1–27 (MEWGYLLEVTSLLAALAVLQRSSGAAA). The Extracellular portion of the chain corresponds to 28 to 271 (ASAKELACQE…NPFFSQDERA (244 aa)). The FZ domain maps to 30–151 (AKELACQEIT…GNPDTLCMDY (122 aa)). Disulfide bonds link Cys35-Cys96, Cys43-Cys89, Cys80-Cys118, Cys107-Cys148, and Cys111-Cys135. N-linked (GlcNAc...) asparagine glycosylation occurs at Asn49. 71 to 78 (QFWPLVEI) is a hexadecanoate binding site. Positions 95–100 (ICLEDY) are wnt-binding. A wnt-binding region spans residues 147 to 152 (LCMDYN). Asn152 carries an N-linked (GlcNAc...) asparagine glycan. A disordered region spans residues 155–222 (DLTTAAPSPP…KARPPGGGAA (68 aa)). Residues 161-175 (PSPPRRLPPPQPGEQ) are compositionally biased toward pro residues. Composition is skewed to low complexity over residues 176 to 186 (PPSGSGHSRPP) and 199 to 222 (GSGD…GGAA). Residues 272–292 (FTVFWIGLWSVLCFVSTFATV) traverse the membrane as a helical segment. At 293-308 (STFLIDMERFKYPERP) the chain is on the cytoplasmic side. The helical transmembrane segment at 309–329 (IIFLSACYLFVSVGYLVRLVA) threads the bilayer. At 330–393 (GHEKVACSGG…RYETTGPALC (64 aa)) the chain is on the extracellular side. Residues 394–414 (TVVFLLVYFFGMASSIWWVIL) traverse the membrane as a helical segment. At 415 to 436 (SLTWFLAAGMKWGNEAIAGYSQ) the chain is on the cytoplasmic side. Residues 437 to 457 (YFHLAAWLVPSVKSIAVLALS) form a helical membrane-spanning segment. Topologically, residues 458–480 (SVDGDPVAGICYVGNQSLDNLRG) are extracellular. A glycan (N-linked (GlcNAc...) asparagine) is linked at Asn472. The chain crosses the membrane as a helical span at residues 481–501 (FVLAPLVIYLFIGTMFLLAGF). Residues 502–529 (VSLFRIRSVIKQQGGPTKTHKLEKLMIR) are Cytoplasmic-facing. The helical transmembrane segment at 530–550 (LGLFTVLYTVPAAVVVACLFY) threads the bilayer. At 551 to 581 (EQHNRPRWEATHNCPCLRDLQPDQARRPDYA) the chain is on the extracellular side. Residues 582–602 (VFMLKYFMCLVVGITSGVWVW) traverse the membrane as a helical segment. The Cytoplasmic segment spans residues 603-684 (SGKTLESWRA…YPKQMPLSQV (82 aa)). A Lys-Thr-X-X-X-Trp motif, mediates interaction with the PDZ domain of Dvl family members motif is present at residues 605 to 610 (KTLESW). Over residues 630 to 654 (AGGSGPGGGGPGPGGGGGHGGGGGS) the composition is skewed to gly residues. The disordered stretch occupies residues 630 to 655 (AGGSGPGGGGPGPGGGGGHGGGGGSL). A PDZ-binding motif is present at residues 682 to 684 (SQV).

Belongs to the G-protein coupled receptor Fz/Smo family. Component of a Wnt-signaling complex that contains a WNT protein, a FZD protein and LRP5 or LRP6. Interacts directly with LRP5 or LRP6; the interaction is promoted by Wnt-binding and signaling and inhibited by DKK1. Interacts (via the PDZ-binding motif) with GPOC (via its PDZ domain). Interacts with RSPO1 and RSPO3. Interacts with glypican GPC3. Post-translationally, ubiquitinated by ZNRF3, leading to its degradation by the proteasome.

It is found in the membrane. Its subcellular location is the golgi apparatus. The protein localises to the cell membrane. Its function is as follows. Receptor for Wnt proteins. Component of the Wnt-Fzd-LRP5-LRP6 complex that triggers beta-catenin signaling through inducing aggregation of receptor-ligand complexes into ribosome-sized signalosomes. The beta-catenin canonical signaling pathway leads to the activation of disheveled proteins, inhibition of GSK-3 kinase, nuclear accumulation of beta-catenin and activation of Wnt target genes. A second signaling pathway involving PKC and calcium fluxes has been seen for some family members, but it is not yet clear if it represents a distinct pathway or if it can be integrated in the canonical pathway, as PKC seems to be required for Wnt-mediated inactivation of GSK-3 kinase. Both pathways seem to involve interactions with G-proteins. May be involved in transduction and intercellular transmission of polarity information during tissue morphogenesis and/or in differentiated tissues. Coreceptor along with RYK of Wnt proteins, such as WNT1. The sequence is that of Frizzled-8 (Fzd8) from Rattus norvegicus (Rat).